Reading from the N-terminus, the 139-residue chain is Large ribosomal subunit protein uL16 (139 aa).

The protein belongs to the universal ribosomal protein uL16 family. Part of the 50S ribosomal subunit.

Functionally, binds 23S rRNA and is also seen to make contacts with the A and possibly P site tRNAs. The sequence is that of Large ribosomal subunit protein uL16 (rplP) from Neorickettsia sennetsu (strain ATCC VR-367 / Miyayama) (Ehrlichia sennetsu).